A 396-amino-acid chain; its full sequence is Putative F-box protein At4g22660 (396 aa).

Residues 7-58 (PNTWSDLPLDLLNLVFKRLSFANFRQAKSVCSSWYSASKQSVPKNQIPWLML) form the F-box domain.

This chain is Putative F-box protein At4g22660, found in Arabidopsis thaliana (Mouse-ear cress).